The primary structure comprises 143 residues: MAKKILGYIKLQVKAGSATPSPPIGPALGQRGVNIMGFCKEFNARTENVEKGTPLPTVITVYQDKSFTFITKTPPATHYLKQITGLKSGAKLTGRETVGEVTRTQLREIAEKKMKDLNANDLEAAAKIIEGSAKAMGLKIVEA.

Belongs to the universal ribosomal protein uL11 family. In terms of assembly, part of the ribosomal stalk of the 50S ribosomal subunit. Interacts with L10 and the large rRNA to form the base of the stalk. L10 forms an elongated spine to which L12 dimers bind in a sequential fashion forming a multimeric L10(L12)X complex. In terms of processing, one or more lysine residues are methylated.

In terms of biological role, forms part of the ribosomal stalk which helps the ribosome interact with GTP-bound translation factors. This is Large ribosomal subunit protein uL11 from Caulobacter vibrioides (strain ATCC 19089 / CIP 103742 / CB 15) (Caulobacter crescentus).